The sequence spans 680 residues: Probable ATP-dependent RNA helicase pitchoune (680 aa).

The tract at residues 1 to 168 is disordered; the sequence is MSIREKLLMK…GKPAKDDEPF (168 aa). Residues 29 to 42 show a composition bias toward polar residues; it reads KNAQKQEPPKQNGN. Residues 59 to 69 are compositionally biased toward acidic residues; the sequence is DEDDDLEEDFQ. Residues 74–83 show a composition bias toward basic residues; it reads PKKKQQKQPP. Acidic residues predominate over residues 95–141; that stretch reads SESDDDEQEDEADEDSDLDEVAEVDEEDVDSGSEDDDQQEDEDEEEP. Residues 187 to 215 carry the Q motif motif; sequence FASLKGAVSEATLRAIKEMGFTEMTEIQS. One can recognise a Helicase ATP-binding domain in the interval 218–393; it reads LTPLLKGRDL…KLALKSEPIY (176 aa). An ATP-binding site is contributed by 231 to 238; the sequence is AQTGSGKT. The DEVD box motif lies at 341 to 344; the sequence is DEVD. Residues 407–577 form the Helicase C-terminal domain; it reads GLEQGYIVCP…DIQLQLEKLI (171 aa). Residues 659-680 form a disordered region; the sequence is GSASKQRHFKQVNRDQAKKFMR. The span at 670–680 shows a compositional bias: basic and acidic residues; it reads VNRDQAKKFMR.

It belongs to the DEAD box helicase family. DDX18/HAS1 subfamily.

The protein localises to the nucleus. It is found in the nucleolus. The enzyme catalyses ATP + H2O = ADP + phosphate + H(+). Its function is as follows. Probable RNA-dependent helicase. Functions in cell growth and proliferation. May have a role in ribosome biogenesis and, consequently, in protein biosynthesis. This chain is Probable ATP-dependent RNA helicase pitchoune (pit), found in Drosophila melanogaster (Fruit fly).